Here is a 177-residue protein sequence, read N- to C-terminus: Large ribosomal subunit protein uL10 (177 aa).

The protein belongs to the universal ribosomal protein uL10 family. Part of the ribosomal stalk of the 50S ribosomal subunit. The N-terminus interacts with L11 and the large rRNA to form the base of the stalk. The C-terminus forms an elongated spine to which L12 dimers bind in a sequential fashion forming a multimeric L10(L12)X complex.

Forms part of the ribosomal stalk, playing a central role in the interaction of the ribosome with GTP-bound translation factors. This is Large ribosomal subunit protein uL10 from Variovorax paradoxus (strain S110).